Reading from the N-terminus, the 341-residue chain is Ferrochelatase (341 aa).

Residues His-189 and Glu-293 each contribute to the Fe cation site.

Belongs to the ferrochelatase family.

The protein resides in the cytoplasm. It carries out the reaction heme b + 2 H(+) = protoporphyrin IX + Fe(2+). Its pathway is porphyrin-containing compound metabolism; protoheme biosynthesis; protoheme from protoporphyrin-IX: step 1/1. Its function is as follows. Catalyzes the ferrous insertion into protoporphyrin IX. The polypeptide is Ferrochelatase (Pseudomonas fluorescens (strain SBW25)).